We begin with the raw amino-acid sequence, 121 residues long: Large ribosomal subunit protein bL12 (121 aa).

Belongs to the bacterial ribosomal protein bL12 family. Homodimer. Part of the ribosomal stalk of the 50S ribosomal subunit. Forms a multimeric L10(L12)X complex, where L10 forms an elongated spine to which 2 to 4 L12 dimers bind in a sequential fashion. Binds GTP-bound translation factors.

Its function is as follows. Forms part of the ribosomal stalk which helps the ribosome interact with GTP-bound translation factors. Is thus essential for accurate translation. In Pectobacterium carotovorum subsp. carotovorum (strain PC1), this protein is Large ribosomal subunit protein bL12.